We begin with the raw amino-acid sequence, 356 residues long: Histidinol-phosphate aminotransferase 2 (356 aa).

The residue at position 213 (lysine 213) is an N6-(pyridoxal phosphate)lysine.

Belongs to the class-II pyridoxal-phosphate-dependent aminotransferase family. Histidinol-phosphate aminotransferase subfamily. In terms of assembly, homodimer. Requires pyridoxal 5'-phosphate as cofactor.

It carries out the reaction L-histidinol phosphate + 2-oxoglutarate = 3-(imidazol-4-yl)-2-oxopropyl phosphate + L-glutamate. It participates in amino-acid biosynthesis; L-histidine biosynthesis; L-histidine from 5-phospho-alpha-D-ribose 1-diphosphate: step 7/9. The chain is Histidinol-phosphate aminotransferase 2 from Burkholderia mallei (strain ATCC 23344).